Here is an 85-residue protein sequence, read N- to C-terminus: Phosphoribosyl-AMP cyclohydrolase (85 aa).

Position 48 (Asp48) interacts with Mg(2+). Cys49 contacts Zn(2+). 2 residues coordinate Mg(2+): Asp50 and Asp52. Zn(2+)-binding residues include Cys65 and Cys72.

Belongs to the PRA-CH family. As to quaternary structure, homodimer. It depends on Mg(2+) as a cofactor. Zn(2+) is required as a cofactor.

It localises to the cytoplasm. The enzyme catalyses 1-(5-phospho-beta-D-ribosyl)-5'-AMP + H2O = 1-(5-phospho-beta-D-ribosyl)-5-[(5-phospho-beta-D-ribosylamino)methylideneamino]imidazole-4-carboxamide. The protein operates within amino-acid biosynthesis; L-histidine biosynthesis; L-histidine from 5-phospho-alpha-D-ribose 1-diphosphate: step 3/9. In terms of biological role, catalyzes the hydrolysis of the adenine ring of phosphoribosyl-AMP. This is Phosphoribosyl-AMP cyclohydrolase (hisI) from Saccharolobus solfataricus (strain ATCC 35092 / DSM 1617 / JCM 11322 / P2) (Sulfolobus solfataricus).